Here is a 206-residue protein sequence, read N- to C-terminus: Thymidylate kinase (206 aa).

Residue 11–18 coordinates ATP; sequence GIDGAGKT.

It belongs to the thymidylate kinase family.

The enzyme catalyses dTMP + ATP = dTDP + ADP. Its function is as follows. Phosphorylation of dTMP to form dTDP in both de novo and salvage pathways of dTTP synthesis. This Paraburkholderia xenovorans (strain LB400) protein is Thymidylate kinase.